The sequence spans 262 residues: MSDILNKIIATKREEVAAARLAKPLAIVEAEAIAQPAPRDFVGAIRNKIANDRPAVIAEIKKASPSKGIIRPDFQPADIARSYEQHGAACLSVLTDRQYFQGCPEYLQSARAACALPVLRKDFMVDAYQVAEARAMGADAILLIAAALTLEEMQALETQASAYGMAVLVEVHNGEELDAALQLKTPLLGINNRNLRTFAVTLETTLGLLSRIPAGRIVVTESGILKPEEVALMRTNKVNAFLVGEAFMRVPEPGAELARLFA.

It belongs to the TrpC family.

The catalysed reaction is 1-(2-carboxyphenylamino)-1-deoxy-D-ribulose 5-phosphate + H(+) = (1S,2R)-1-C-(indol-3-yl)glycerol 3-phosphate + CO2 + H2O. Its pathway is amino-acid biosynthesis; L-tryptophan biosynthesis; L-tryptophan from chorismate: step 4/5. This chain is Indole-3-glycerol phosphate synthase, found in Dechloromonas aromatica (strain RCB).